A 1383-amino-acid polypeptide reads, in one-letter code: MTSYSFTEKKRIRKDFGKQRSILEVPFLLAIQVDSYREFLQEDVEPNKRKDLGLHAALKSVFPISSYSGNAALEYVGYKLGQPVFDERECRQRGMSYGAPLRVTVRLVIYDRESSTKAIKYVKEQEVYLGEIPLMTGNGTFIVNGTERVIVSQLHRSPGVFFDHDRGKTHSSGKLLYSARIIPYRGSWLDFEFDPKDALFTRIDRRRKLPVSILLRALGYSNEEMLAEFFEINTFHINPDEGVQLELVPERLRGETLNFDLADGDKVIVEAGKRITARHVKQLEAAGVAALAVPDDYLVGRILSHDVVDGSTGELLANANDEINEDQLAAFRKAGVDAVGTLWVNDLDRGPYLSNTLRIDPTKTQLEALVEIYRMMRPGEPPTKEAAQNLFHNLFFTFERYDLSTVGRMKFNRRVGRKDVLGESVLYDKKYFAERNDEESKRLVAEHADTSDILEVIKVLTEIRNGRGVVDDIDHLGNRRVRSVGEMAENVFRVGLVRVERAVKERLSMAESEGLTPQELINAKPVAAAIKEFFGSSQLSQFMDQNNPLSEVTHKRRVFALGPGGLTRERAGFEVRDVHPTHYGRVCTIETPEGPNIGLINSLAVFARTNQYGFLETPYRKVLDGKVSDDVEYLSAIEENEYVIAQANALTDAKNMLTEQFVPCRFQGESLLKPPSEVHFMDVSPMQTVSVAAALVPFLEHDDANRALMGANMQRQAVPTLRSQKPLVGTGIERAVARDSGVTVNALRGGVIEQIDAARIVVKVNEAEIGGGTDAGVDIYNLIKYTRSNQNTCINQRPLVNVGDVIARGDVLADGPSTDIGELALGQNMLIAFMPWNGYNFEDSILLSERVVEEDRYTTIHIEELTCVARDTKLGPEEISADIPNVSEQALNRLDESGVVYIGAEVRAGDIMVGKVTPKGESQLTPEEKLLRAIFGEKASDVKDSSLRVPPGMDGTVIDVQVFTRDGIEKDKRARQIEENEIKRVKKDFDDQFRILEAAIYARLRSQIVGKVANGGANLKKGDTVTDAYLDGLKKSDWFQLRMKDEDAADAIERAQKQIQAHEKEFEARFADKRGKITQGDDLAPGVLKMVKVFLAVKRRIQPGDKMAGRHGNKGVVSNVVPVEDMPYMATGESVDIVLNPLGVPSRMNIGQILEVHLGWAAKGLGRKIQRMLEAQAAVSELRKFLNDIYNHDNAINAQRVDLSQFSDEELLNLGKNLIDGVPMATPVFDGASEAEIKRMLELADLPQSGQTQLYDGRTGEAFDRKTTVGYMHYLKLNHLVDDKMHARSTGPYSLVTQQPLGGKAQFGGQRFGEMEVWALEAYGAAYTLQEMLTVKSDDVQGRNQMYKNIVDGEHEMVAGMPESFNVLVKEIRSLAINMELEE.

Belongs to the RNA polymerase beta chain family. As to quaternary structure, the RNAP catalytic core consists of 2 alpha, 1 beta, 1 beta' and 1 omega subunit. When a sigma factor is associated with the core the holoenzyme is formed, which can initiate transcription.

The enzyme catalyses RNA(n) + a ribonucleoside 5'-triphosphate = RNA(n+1) + diphosphate. In terms of biological role, DNA-dependent RNA polymerase catalyzes the transcription of DNA into RNA using the four ribonucleoside triphosphates as substrates. This Xanthomonas euvesicatoria pv. vesicatoria (strain 85-10) (Xanthomonas campestris pv. vesicatoria) protein is DNA-directed RNA polymerase subunit beta.